A 649-amino-acid chain; its full sequence is Probable ADP-ribosylation factor GTPase-activating protein AGD14 (649 aa).

An Arf-GAP domain is found at 12–130 (EKIIRGLMKL…KYAGANDADK (119 aa)). Residues 27 to 50 (CINCNSLGPQYVCTTFWTFVCMAC) form a C4-type zinc finger. 4 disordered regions span residues 124 to 159 (GAND…QSPP), 209 to 279 (FSNE…VRSV), 294 to 316 (LGEA…SNHV), and 366 to 391 (FTPA…SAPK). Residues 127–146 (DADKPSKDSQDHVSSEDMTR) are compositionally biased toward basic and acidic residues. A compositionally biased stretch (low complexity) spans 150 to 159 (SYHSYSQSPP). 4 stretches are compositionally biased toward polar residues: residues 248-257 (PQFQHSNAPP), 269-279 (RTTSSGSVRSV), 300-315 (ESRQ…TSNH), and 366-385 (FTPA…SRPS).

Its function is as follows. GTPase-activating protein (GAP) for ADP ribosylation factor (ARF). The protein is Probable ADP-ribosylation factor GTPase-activating protein AGD14 (AGD14) of Arabidopsis thaliana (Mouse-ear cress).